A 202-amino-acid chain; its full sequence is Methylthioribulose-1-phosphate dehydratase (202 aa).

Zn(2+) is bound by residues His93 and His95.

It belongs to the aldolase class II family. MtnB subfamily. The cofactor is Zn(2+).

It catalyses the reaction 5-(methylsulfanyl)-D-ribulose 1-phosphate = 5-methylsulfanyl-2,3-dioxopentyl phosphate + H2O. The protein operates within amino-acid biosynthesis; L-methionine biosynthesis via salvage pathway; L-methionine from S-methyl-5-thio-alpha-D-ribose 1-phosphate: step 2/6. Its function is as follows. Catalyzes the dehydration of methylthioribulose-1-phosphate (MTRu-1-P) into 2,3-diketo-5-methylthiopentyl-1-phosphate (DK-MTP-1-P). The chain is Methylthioribulose-1-phosphate dehydratase from Klebsiella pneumoniae (strain 342).